A 229-amino-acid chain; its full sequence is 3-isopropylmalate dehydratase small subunit (229 aa).

Residues 198–229 (LPVKREPEQPIESAREGEYPDWQGPLADRGII) form a disordered region. Residues 200–215 (VKREPEQPIESAREGE) show a composition bias toward basic and acidic residues.

It belongs to the LeuD family. LeuD type 1 subfamily. As to quaternary structure, heterodimer of LeuC and LeuD.

It catalyses the reaction (2R,3S)-3-isopropylmalate = (2S)-2-isopropylmalate. It functions in the pathway amino-acid biosynthesis; L-leucine biosynthesis; L-leucine from 3-methyl-2-oxobutanoate: step 2/4. Functionally, catalyzes the isomerization between 2-isopropylmalate and 3-isopropylmalate, via the formation of 2-isopropylmaleate. The protein is 3-isopropylmalate dehydratase small subunit of Bifidobacterium adolescentis (strain ATCC 15703 / DSM 20083 / NCTC 11814 / E194a).